We begin with the raw amino-acid sequence, 188 residues long: GTP cyclohydrolase 1 (188 aa).

Cys-78, His-81, and Cys-150 together coordinate Zn(2+).

It belongs to the GTP cyclohydrolase I family. As to quaternary structure, homomer.

It carries out the reaction GTP + H2O = 7,8-dihydroneopterin 3'-triphosphate + formate + H(+). It participates in cofactor biosynthesis; 7,8-dihydroneopterin triphosphate biosynthesis; 7,8-dihydroneopterin triphosphate from GTP: step 1/1. The chain is GTP cyclohydrolase 1 from Geobacillus sp. (strain WCH70).